The following is a 204-amino-acid chain: VEL1-related protein AC977.05c (204 aa).

An N-terminal signal peptide occupies residues 1-17 (MIFKNLISLFFIGLATA).

Belongs to the VEL1 family.

It localises to the cytoplasm. Its subcellular location is the cytosol. The polypeptide is VEL1-related protein AC977.05c (Schizosaccharomyces pombe (strain 972 / ATCC 24843) (Fission yeast)).